A 321-amino-acid polypeptide reads, in one-letter code: Lipoyl synthase (321 aa).

[4Fe-4S] cluster-binding residues include cysteine 68, cysteine 73, cysteine 79, cysteine 94, cysteine 98, cysteine 101, and serine 308. A Radical SAM core domain is found at 80–297 (FNHGTATFMI…KAEAMAMGFT (218 aa)).

Belongs to the radical SAM superfamily. Lipoyl synthase family. It depends on [4Fe-4S] cluster as a cofactor.

It localises to the cytoplasm. The catalysed reaction is [[Fe-S] cluster scaffold protein carrying a second [4Fe-4S](2+) cluster] + N(6)-octanoyl-L-lysyl-[protein] + 2 oxidized [2Fe-2S]-[ferredoxin] + 2 S-adenosyl-L-methionine + 4 H(+) = [[Fe-S] cluster scaffold protein] + N(6)-[(R)-dihydrolipoyl]-L-lysyl-[protein] + 4 Fe(3+) + 2 hydrogen sulfide + 2 5'-deoxyadenosine + 2 L-methionine + 2 reduced [2Fe-2S]-[ferredoxin]. Its pathway is protein modification; protein lipoylation via endogenous pathway; protein N(6)-(lipoyl)lysine from octanoyl-[acyl-carrier-protein]: step 2/2. Functionally, catalyzes the radical-mediated insertion of two sulfur atoms into the C-6 and C-8 positions of the octanoyl moiety bound to the lipoyl domains of lipoate-dependent enzymes, thereby converting the octanoylated domains into lipoylated derivatives. The protein is Lipoyl synthase of Pectobacterium atrosepticum (strain SCRI 1043 / ATCC BAA-672) (Erwinia carotovora subsp. atroseptica).